The chain runs to 167 residues: Endoribonuclease YbeY (167 aa).

Positions 125, 129, and 135 each coordinate Zn(2+).

It belongs to the endoribonuclease YbeY family. Zn(2+) serves as cofactor.

It is found in the cytoplasm. Single strand-specific metallo-endoribonuclease involved in late-stage 70S ribosome quality control and in maturation of the 3' terminus of the 16S rRNA. The sequence is that of Endoribonuclease YbeY from Allorhizobium ampelinum (strain ATCC BAA-846 / DSM 112012 / S4) (Agrobacterium vitis (strain S4)).